The sequence spans 72 residues: UPF0270 protein YheU (72 aa).

It belongs to the UPF0270 family.

In Salmonella dublin (strain CT_02021853), this protein is UPF0270 protein YheU.